Reading from the N-terminus, the 332-residue chain is Myogenic-determination protein (332 aa).

Residues 22–54 (HNGYGQPTHPGYGFSAYSQQNPIAHPGQNPHQT) are disordered. The bHLH domain occupies 161-212 (DRRKAATMRERRRLRKVNEAFEILKRRTSSNPNQRLPKVEILRNAIEYIESL). Residues 293 to 309 (TTSPIQNKATPSASDTQ) show a composition bias toward polar residues. A disordered region spans residues 293 to 332 (TTSPIQNKATPSASDTQSPPSSGATAPTSLHVNFKRKCST). Residues 310 to 321 (SPPSSGATAPTS) show a composition bias toward low complexity.

Efficient DNA binding requires dimerization with another bHLH protein.

The protein localises to the nucleus. May play an important role in the early development of muscle. This Drosophila melanogaster (Fruit fly) protein is Myogenic-determination protein (nau).